Here is a 405-residue protein sequence, read N- to C-terminus: MSVDMKLNRAQFDAVMVPNYAPAAVIPVRGEGSRVWDQEGNEFIDFAGGIAVNCLGHCHPALVNALKTQGEKLWHLSNVMTNEPALELATKLVNSTFAERVYFANSGAEANEAALKLARRYALEKHGVEKDEIIAFDKAFHGRTFFTVSVGGQAAYSDGFGPKPQSITHLPFNDVAALEAAVSDKTCAIMLEPLQGEGGIIDADPAFLKAVRELANKHNALVIFDEVQTGVGRTGELYAYMGTDIVPDILTTAKALGGGFPIAAMLTTTEIAEHLKVGTHGSTYGGNPLACAIGNAVLDVVNTPEVLNGVKHREQLLRDGLNKINEKYHVFSEVRGKGLLLGAVLNEQYQGRSRDFLVASVAEGLMSLMAGANVVRFAPSLVIPEADIAEGLARFERAVASIAAA.

Pyridoxal 5'-phosphate contacts are provided by residues 107 to 108 (GA) and F140. A N(2)-acetyl-L-ornithine-binding site is contributed by R143. Pyridoxal 5'-phosphate is bound at residue 225–228 (DEVQ). Residue K254 is modified to N6-(pyridoxal phosphate)lysine. S282 is a N(2)-acetyl-L-ornithine binding site. T283 contacts pyridoxal 5'-phosphate.

Belongs to the class-III pyridoxal-phosphate-dependent aminotransferase family. ArgD subfamily. As to quaternary structure, homodimer. Pyridoxal 5'-phosphate serves as cofactor.

The protein localises to the cytoplasm. It carries out the reaction N(2)-acetyl-L-ornithine + 2-oxoglutarate = N-acetyl-L-glutamate 5-semialdehyde + L-glutamate. The protein operates within amino-acid biosynthesis; L-arginine biosynthesis; N(2)-acetyl-L-ornithine from L-glutamate: step 4/4. The chain is Acetylornithine aminotransferase from Shewanella oneidensis (strain ATCC 700550 / JCM 31522 / CIP 106686 / LMG 19005 / NCIMB 14063 / MR-1).